Reading from the N-terminus, the 514-residue chain is 2,3-bisphosphoglycerate-independent phosphoglycerate mutase (514 aa).

2 residues coordinate Mn(2+): Asp14 and Ser64. Ser64 (phosphoserine intermediate) is an active-site residue. Residues His125, 155 to 156 (RD), Arg187, Arg193, 263 to 266 (RADR), and Lys336 each bind substrate. 5 residues coordinate Mn(2+): Asp403, His407, Asp444, His445, and His463.

The protein belongs to the BPG-independent phosphoglycerate mutase family. In terms of assembly, monomer. Mn(2+) is required as a cofactor.

It carries out the reaction (2R)-2-phosphoglycerate = (2R)-3-phosphoglycerate. It functions in the pathway carbohydrate degradation; glycolysis; pyruvate from D-glyceraldehyde 3-phosphate: step 3/5. Catalyzes the interconversion of 2-phosphoglycerate and 3-phosphoglycerate. The protein is 2,3-bisphosphoglycerate-independent phosphoglycerate mutase of Escherichia coli O6:H1 (strain CFT073 / ATCC 700928 / UPEC).